An 86-amino-acid chain; its full sequence is Cell division topological specificity factor (86 aa).

It belongs to the MinE family.

In terms of biological role, prevents the cell division inhibition by proteins MinC and MinD at internal division sites while permitting inhibition at polar sites. This ensures cell division at the proper site by restricting the formation of a division septum at the midpoint of the long axis of the cell. The polypeptide is Cell division topological specificity factor (Alteromonas mediterranea (strain DSM 17117 / CIP 110805 / LMG 28347 / Deep ecotype)).